Here is a 482-residue protein sequence, read N- to C-terminus: Glutamate--tRNA ligase 1 (482 aa).

Residues 18 to 28 carry the 'HIGH' region motif; that stretch reads PSPTGYLHLGG. The 'KMSKS' region motif lies at 252–256; sequence KLSKR. Lysine 255 is a binding site for ATP.

It belongs to the class-I aminoacyl-tRNA synthetase family. Glutamate--tRNA ligase type 1 subfamily. As to quaternary structure, monomer.

Its subcellular location is the cytoplasm. The catalysed reaction is tRNA(Glu) + L-glutamate + ATP = L-glutamyl-tRNA(Glu) + AMP + diphosphate. Its function is as follows. Catalyzes the attachment of glutamate to tRNA(Glu) in a two-step reaction: glutamate is first activated by ATP to form Glu-AMP and then transferred to the acceptor end of tRNA(Glu). This is Glutamate--tRNA ligase 1 from Erythrobacter litoralis (strain HTCC2594).